A 693-amino-acid chain; its full sequence is Glycine--tRNA ligase beta subunit (693 aa).

Belongs to the class-II aminoacyl-tRNA synthetase family. In terms of assembly, tetramer of two alpha and two beta subunits.

The protein localises to the cytoplasm. It carries out the reaction tRNA(Gly) + glycine + ATP = glycyl-tRNA(Gly) + AMP + diphosphate. The polypeptide is Glycine--tRNA ligase beta subunit (Shouchella clausii (strain KSM-K16) (Alkalihalobacillus clausii)).